Reading from the N-terminus, the 158-residue chain is Interleukin-17A (158 aa).

An N-terminal signal peptide occupies residues 1–25; the sequence is MSPGRASSVSLMLLLLLSLAATVKA. N-linked (GlcNAc...) asparagine glycosylation occurs at N71. 2 disulfides stabilise this stretch: C97/C147 and C102/C149.

It belongs to the IL-17 family. Homodimer. Forms complexes with IL17RA and IL17RC receptors with 2:1 binding stoichiometry: two receptor chains for one interleukin molecule. IL17A homodimer preferentially drives the formation of IL17RA-IL17RC heterodimeric receptor complex. IL17A homodimer adopts an asymmetrical ternary structure with one IL17RA molecule, allowing for high affinity interactions of one IL17A monomer with one IL17RA molecule (via D1 and D2 domains), while disfavoring binding of a second IL17RA molecule on the other IL17A monomer. Heterodimer with IL17F. IL17A-IL17F forms complexes with IL17RA-IL17RC, but with lower affinity when compared to IL17A homodimer. IL17RA and IL17RC chains cannot distinguish between IL17A and IL17F molecules, potentially enabling the formation of topologically distinct complexes. As to expression, expressed by Th17 cell lineage (at protein level). The expression pattern reflects the differentiation state, with IL17A-IL17F heterodimers produced at higher levels than IL17A-IL17A and IL17F-IL17F dimers in fully differentiated Th17 cells. Expressed in innate lymphoid cells (at protein level). Expressed in gamma-delta T cell subsets (at protein level). Expressed in iNKT cells (at protein level).

It localises to the secreted. Effector cytokine of innate and adaptive immune system involved in antimicrobial host defense and maintenance of tissue integrity. Signals via IL17RA-IL17RC heterodimeric receptor complex, triggering homotypic interaction of IL17RA and IL17RC chains with TRAF3IP2 adapter. This leads to downstream TRAF6-mediated activation of NF-kappa-B and MAPkinase pathways ultimately resulting in transcriptional activation of cytokines, chemokines, antimicrobial peptides and matrix metalloproteinases, with potential strong immune inflammation. Plays an important role in connecting T cell-mediated adaptive immunity and acute inflammatory response to destroy extracellular bacteria and fungi. As a signature effector cytokine of T-helper 17 cells (Th17), primarily induces neutrophil activation and recruitment at infection and inflammatory sites. In airway epithelium, mediates neutrophil chemotaxis via induction of CXCL1 and CXCL5 chemokines. In secondary lymphoid organs, contributes to germinal center formation by regulating the chemotactic response of B cells to CXCL12 and CXCL13, enhancing retention of B cells within the germinal centers, B cell somatic hypermutation rate and selection toward plasma cells. Effector cytokine of a subset of gamma-delta T cells that functions as part of an inflammatory circuit downstream IL1B, TLR2 and IL23A-IL12B to promote neutrophil recruitment for efficient bacterial clearance. Effector cytokine of innate immune cells including invariant natural killer cell (iNKT) and group 3 innate lymphoid cells that mediate initial neutrophilic inflammation. Involved in the maintenance of the integrity of epithelial barriers during homeostasis and pathogen infection. Upon acute injury, has a direct role in epithelial barrier formation by regulating OCLN localization and tight junction biogenesis. As part of the mucosal immune response induced by commensal bacteria, enhances host's ability to resist pathogenic bacterial and fungal infections by promoting neutrophil recruitment and antimicrobial peptides release. In synergy with IL17F, mediates the production of antimicrobial beta-defensins DEFB1, DEFB103A, and DEFB104A by mucosal epithelial cells, limiting the entry of microbes through the epithelial barriers. Involved in antiviral host defense through various mechanisms. Enhances immunity against West Nile virus by promoting T cell cytotoxicity. May play a beneficial role in influenza A virus (H5N1) infection by enhancing B cell recruitment and immune response in the lung. Contributes to influenza A virus (H1N1) clearance by driving the differentiation of B-1a B cells, providing for production of virus-specific IgM antibodies at first line of host defense. In Mus musculus (Mouse), this protein is Interleukin-17A (Il17a).